A 66-amino-acid polypeptide reads, in one-letter code: ATP synthase protein 8 (66 aa).

A helical membrane pass occupies residues 8–24; the sequence is PWPMVIMSMILTLFYIT. Residue Lys-54 is modified to N6-acetyllysine; alternate. At Lys-54 the chain carries N6-succinyllysine; alternate. Lys-57 is modified (N6-acetyllysine).

It belongs to the ATPase protein 8 family. As to quaternary structure, F-type ATPases have 2 components, CF(1) - the catalytic core - and CF(0) - the membrane proton channel. Component of an ATP synthase complex composed of ATP5PB, ATP5MC1, ATP5F1E, ATP5PD, ATP5ME, ATP5PF, ATP5MF, MT-ATP6, MT-ATP8, ATP5F1A, ATP5F1B, ATP5F1D, ATP5F1C, ATP5PO, ATP5MG, ATP5MK and ATP5MJ. Interacts with PRICKLE3.

It localises to the mitochondrion membrane. Its function is as follows. Mitochondrial membrane ATP synthase (F(1)F(0) ATP synthase or Complex V) produces ATP from ADP in the presence of a proton gradient across the membrane which is generated by electron transport complexes of the respiratory chain. F-type ATPases consist of two structural domains, F(1) - containing the extramembraneous catalytic core and F(0) - containing the membrane proton channel, linked together by a central stalk and a peripheral stalk. During catalysis, ATP synthesis in the catalytic domain of F(1) is coupled via a rotary mechanism of the central stalk subunits to proton translocation. Part of the complex F(0) domain. Minor subunit located with subunit a in the membrane. The chain is ATP synthase protein 8 (MT-ATP8) from Alouatta sara (Bolivian red howler monkey).